The sequence spans 103 residues: Translation initiation factor 1A (103 aa).

Residues 11 to 86 (TRVRTPRENE…EKCDVIWRYT (76 aa)) enclose the S1-like domain.

Belongs to the eIF-1A family.

Its function is as follows. Seems to be required for maximal rate of protein biosynthesis. Enhances ribosome dissociation into subunits and stabilizes the binding of the initiator Met-tRNA(I) to 40 S ribosomal subunits. The sequence is that of Translation initiation factor 1A (eIF1A) from Methanococcus maripaludis (strain C5 / ATCC BAA-1333).